We begin with the raw amino-acid sequence, 137 residues long: Large ribosomal subunit protein uL16 (137 aa).

It belongs to the universal ribosomal protein uL16 family. Part of the 50S ribosomal subunit.

Its function is as follows. Binds 23S rRNA and is also seen to make contacts with the A and possibly P site tRNAs. The protein is Large ribosomal subunit protein uL16 of Endomicrobium trichonymphae.